The chain runs to 619 residues: Sodium-coupled monocarboxylate transporter 2 (619 aa).

Topologically, residues 1 to 9 are extracellular; it reads MRVKNFEAW. Residues 10–30 form a helical membrane-spanning segment; the sequence is DYVVFAGLFVISSGIGVFFAI. Over 31–47 the chain is Cytoplasmic; sequence KERKKTTSREFLVGGRQ. Residues 48–68 form a helical membrane-spanning segment; the sequence is MSFGPVALSLTASFMSAVTVL. At 69-80 the chain is on the extracellular side; that stretch reads GTPAEVYRFGAS. The helical transmembrane segment at 81–101 threads the bilayer; it reads FFLFLISYVFVVFFTSELFLP. The Cytoplasmic segment spans residues 102–128; it reads VFYRSGITSTYEYLQLRFNKPVRYAAT. Residues 129 to 149 form a helical membrane-spanning segment; that stretch reads IIYIVQTILYTGVVVYAPALA. Residues 150 to 157 are Extracellular-facing; it reads LNQVTGFN. The helical transmembrane segment at 158–178 threads the bilayer; sequence LWASVFATGIVCTFYCSLGGL. Topologically, residues 179-180 are cytoplasmic; sequence KA. The chain crosses the membrane as a helical span at residues 181–201; the sequence is VVWTDAFQMVVMIVGFLTVLI. Residues 202-235 are Extracellular-facing; the sequence is QGSNHVGGFNNVLEKAGNGSRLHIVDFDVDPLRR. The N-linked (GlcNAc...) asparagine glycan is linked to Asn-219. Residues 236–256 traverse the membrane as a helical segment; the sequence is HTFWTITIGGTFTWLGVYGVN. Topologically, residues 257 to 275 are cytoplasmic; it reads QSTIQRCISCKTEKHAKLA. Residues 276–296 traverse the membrane as a helical segment; the sequence is LYFNLLGLWIIVACAVFSGLI. The Extracellular segment spans residues 297 to 321; the sequence is MYSHFKDCDPWTSGVISAPDQLMPY. The helical transmembrane segment at 322–342 threads the bilayer; sequence FVMEIFATMPGLPGLFVACAF. The Cytoplasmic segment spans residues 343–385; it reads SGTLSTVAASINALATVTFEDFVKSCFPHLSDKLSTWISKGLC. A helical membrane pass occupies residues 386–406; that stretch reads ILFGIMCTSMAVVASLMGSVV. Over 407 to 411 the chain is Extracellular; sequence QAALS. Residues 412-432 traverse the membrane as a helical segment; that stretch reads IHGMCGGPMLGLFTLGLVFPF. Topologically, residues 433-437 are cytoplasmic; the sequence is VNWKG. A helical transmembrane segment spans residues 438-458; sequence ALGGLLTGITLSFWVAIGSFI. At 459 to 504 the chain is on the extracellular side; that stretch reads YPAPESKTLPLPLSTEHCVELNITTTVAPQISSRPVLADTWYSLSY. Asn-480 is a glycosylation site (N-linked (GlcNAc...) asparagine). Residues 505-525 form a helical membrane-spanning segment; it reads LYFSAVGCLGCIAAGIIISFL. Residues 526 to 619 lie on the Cytoplasmic side of the membrane; sequence TGKQRGKDID…NSVPEKTTYF (94 aa).

Belongs to the sodium:solute symporter (SSF) (TC 2.A.21) family. In terms of tissue distribution, expressed in the cortical region of the kidney corresponding to the proximal tubule. Expressed in Mueller cells of the inner retina (at protein level). Isoform 1 is expressed in the retina, kidney, small intestine and skeletal muscle. Isoform 2 is not detected in the kidney, small intestine and skeletal muscle. In the kidney, expressed predominantly in tubular epithelial cells of the cortical region and in the convoluted portions of the proximal tubule (pars convoluta). In the small intestine, its expression is highest in the proximal part and gradually decreased towards the distal end. Expressed in the neural retina. Not detected in the caecum and colon.

The protein localises to the apical cell membrane. The enzyme catalyses (S)-lactate(out) + Na(+)(out) = (S)-lactate(in) + Na(+)(in). It carries out the reaction nicotinate(out) + Na(+)(out) = nicotinate(in) + Na(+)(in). It catalyses the reaction pyruvate(out) + Na(+)(out) = pyruvate(in) + Na(+)(in). The catalysed reaction is propanoate(out) + Na(+)(out) = propanoate(in) + Na(+)(in). The enzyme catalyses butanoate(out) + Na(+)(out) = butanoate(in) + Na(+)(in). It carries out the reaction acetoacetate(out) + Na(+)(out) = acetoacetate(in) + Na(+)(in). Functionally, acts as an electroneutral and low-affinity sodium (Na(+))-dependent sodium-coupled solute transporter. Catalyzes the transport across the plasma membrane of many monocarboxylates such as lactate, pyruvate, nicotinate, propionate, butyrate and beta-D-hydroxybutyrate. May be responsible for the first step of reabsorption of monocarboxylates from the lumen of the proximal tubule of the kidney and the small intestine. May play also a role in monocarboxylates transport in the retina. Mediates electroneutral uptake of lactate, with a stoichiometry of 2 Na(+) for each lactate. The sequence is that of Sodium-coupled monocarboxylate transporter 2 (Slc5a12) from Mus musculus (Mouse).